The following is a 513-amino-acid chain: Membrane protein (513 aa).

Tandem repeats lie at residues 9-11, 12-14, 15-17, and 18-20. The tract at residues 9–20 is 4 X 3 AA tandem repeats of P-S-A; sequence PSAPSAPSAPSA. Transmembrane regions (helical) follow at residues 32–52, 56–76, 79–99, 126–146, 165–185, 208–228, 254–274, 309–329, 332–352, 360–380, 400–420, 422–442, 447–467, and 487–507; these read LTLH…LAIP, GLTV…VVWI, AVSY…LIGF, TALA…VTGL, ILIG…SATA, NIAA…NVGI, QWLI…YFLV, LAAV…LHSF, ATVT…VMDW, PWGT…LLST, GALL…LGFA, ATAL…TLPG, VGMT…PINA, and IGIP…ATYW.

This sequence belongs to the SLC13A/DASS transporter (TC 2.A.47) family. DIT1 subfamily.

The protein resides in the cell membrane. The chain is Membrane protein from Cupriavidus necator (strain ATCC 17699 / DSM 428 / KCTC 22496 / NCIMB 10442 / H16 / Stanier 337) (Ralstonia eutropha).